Here is a 449-residue protein sequence, read N- to C-terminus: UNC93-like protein MFSD11 (449 aa).

A helical transmembrane segment spans residues 8–28 (LFNIIILGVAFMFMFTAFQTC). Residue asparagine 40 is glycosylated (N-linked (GlcNAc...) asparagine). The next 5 membrane-spanning stretches (helical) occupy residues 53–73 (AIIY…VAIV), 74–94 (GPQL…AVFI), 96–116 (PFPW…AVLW), 138–158 (IFWA…YFAW), and 170–190 (RTVF…FFLI). At serine 204 the chain carries Phosphoserine. A run of 6 helical transmembrane segments spans residues 239–259 (MLLL…FSGV), 277–297 (LIGL…SLFG), 309–329 (PVVL…FLNM), 359–379 (FLLG…LGFL), 385–405 (APAF…AFFY), and 410–430 (LLHW…ISFF).

This sequence belongs to the unc-93 family.

The protein resides in the membrane. This chain is UNC93-like protein MFSD11 (MFSD11), found in Macaca fascicularis (Crab-eating macaque).